Reading from the N-terminus, the 337-residue chain is Phenylalanine--tRNA ligase alpha subunit (337 aa).

Position 252 (E252) interacts with Mg(2+).

The protein belongs to the class-II aminoacyl-tRNA synthetase family. Phe-tRNA synthetase alpha subunit type 1 subfamily. Tetramer of two alpha and two beta subunits. It depends on Mg(2+) as a cofactor.

The protein resides in the cytoplasm. It catalyses the reaction tRNA(Phe) + L-phenylalanine + ATP = L-phenylalanyl-tRNA(Phe) + AMP + diphosphate + H(+). In Saccharophagus degradans (strain 2-40 / ATCC 43961 / DSM 17024), this protein is Phenylalanine--tRNA ligase alpha subunit.